A 412-amino-acid chain; its full sequence is MSELHALLTFPERPISQSYYVPKLQHFLKSGIPATYTLEQVAAFEHEEKNRNGDKEFRESTDDNKTSNTTPLHVLARSLPLDIKDEELQVVMDMMNILFEYGAGWNFIDYEDKTVGDLFLERNQSRESPLYRRLVEAGVSAELLLRKLNGGDVEFLDTDELIGIEPEESVQTAVDGQKEESVGSDDDATAANQQVYLKTELEYKDDALITKENKDGVMMDWETKIMELASETLFPDPEATNSATILNIGFGMGIIDTFIQARKPYRHYICEAHPDVLAKMKMDGWYEKDNVVILEGRWQDTLNNLLDKGEVFFDGIYYDTFSEHYQDILDLYDVVVGLIKPEGVFSFFNGLGADRSLCYDVYKEIVEIDVATYGMKCDYTRYSLDEQLPDWNDVKRSYFNCNYYYHPRITFA.

A compositionally biased stretch (basic and acidic residues) spans 48–65; the sequence is EKNRNGDKEFRESTDDNK. Disordered regions lie at residues 48 to 69 and 169 to 189; these read EKNR…TSNT and SVQT…DDAT. Phosphoserine occurs at positions 181 and 184. The 224-residue stretch at 189–412 folds into the RMT2 domain; sequence TAANQQVYLK…YYYHPRITFA (224 aa). S-adenosyl-L-methionine is bound by residues Tyr196, Met226, 250–255, 271–273, 298–299, and Asp319; these read FGMGII, EAH, and WQ.

This sequence belongs to the class I-like SAM-binding methyltransferase superfamily. RMT2 methyltransferase family. As to quaternary structure, monomer. Interacts with nucleoporins NUP49, NUP57 and NUP100.

The protein localises to the cytoplasm. It localises to the nucleus. S-adenosyl-L-methionine-dependent protein-arginine N-methyltransferase that methylates the delta-nitrogen atom of arginine residues to form N5-methylarginine (type IV) in target proteins. Monomethylates ribosomal protein L12 (RPL12A/RPL12B) at 'Arg-67'. In Saccharomyces cerevisiae (strain ATCC 204508 / S288c) (Baker's yeast), this protein is Protein arginine N-methyltransferase 2.